Here is a 91-residue protein sequence, read N- to C-terminus: Ribonuclease P protein component 4 (91 aa).

Residues C55, C58, C78, and C81 each contribute to the Zn(2+) site.

The protein belongs to the eukaryotic/archaeal RNase P protein component 4 family. As to quaternary structure, consists of a catalytic RNA component and at least 4-5 protein subunits. Zn(2+) serves as cofactor.

It is found in the cytoplasm. The catalysed reaction is Endonucleolytic cleavage of RNA, removing 5'-extranucleotides from tRNA precursor.. Part of ribonuclease P, a protein complex that generates mature tRNA molecules by cleaving their 5'-ends. In Thermoplasma acidophilum (strain ATCC 25905 / DSM 1728 / JCM 9062 / NBRC 15155 / AMRC-C165), this protein is Ribonuclease P protein component 4.